The primary structure comprises 238 residues: Lipid transferase CIDEC (238 aa).

A required for liquid-liquid phase separation (LLPS) region spans residues 1–35 (MDYAMKSLSLLYPRSLSRHVAVSTAVVTQQLVSEP). In terms of domain architecture, CIDE-N spans 41–118 (RARPCRVSTA…VLQKGQKWKS (78 aa)).

This sequence belongs to the CIDE family. Homodimer. Interacts with CIDEA. Homooligomer; undergoes liquid-liquid phase separation (LLPS) via its N-terminus, facilitating lipid droplet fusion, occurs at the lipid droplet contact sites. Interacts with PLIN1. Interacts with NFAT5; this interaction is direct and retains NFAT5 in the cytoplasm. Interacts with CEBPB. Interacts with isoform CLSTN3beta of CLSTN3; inhibiting the lipid transferase activity of CIDEC. Ubiquitinated and targeted to proteasomal degradation, resulting in a short half-life (about 15 minutes in 3T3-L1 cells). Protein stability depends on triaclyglycerol synthesis, fatty acid availability and lipid droplet formation.

It localises to the lipid droplet. It is found in the endoplasmic reticulum. The protein resides in the nucleus. It catalyses the reaction a triacyl-sn-glycerol(in) = a triacyl-sn-glycerol(out). Its function is as follows. Lipid transferase specifically expressed in white adipose tissue, which promotes unilocular lipid droplet formation by mediating lipid droplet fusion. Lipid droplet fusion promotes their enlargement, restricting lipolysis and favoring lipid storage. Localizes on the lipid droplet surface, at focal contact sites between lipid droplets, and mediates atypical lipid droplet fusion by undergoing liquid-liquid phase separation (LLPS) and promoting directional net neutral lipid transfer from the smaller to larger lipid droplets. The transfer direction may be driven by the internal pressure difference between the contacting lipid droplet pair. Its role in neutral lipid transfer and lipid droplet enlargement is activated by the interaction with PLIN1. May also act as a CEBPB coactivator in the white adipose tissue to control the expression of a subset of CEBPB downstream target genes, including SOCS1, SOCS3, TGFB1, TGFBR1, ID2 and XDH. When overexpressed in preadipocytes, induces apoptosis or increases cell susceptibility to apoptosis induced by serum deprivation or TGFB treatment. The polypeptide is Lipid transferase CIDEC (Rattus norvegicus (Rat)).